Consider the following 260-residue polypeptide: Indole-3-glycerol phosphate synthase (260 aa).

The protein belongs to the TrpC family.

It catalyses the reaction 1-(2-carboxyphenylamino)-1-deoxy-D-ribulose 5-phosphate + H(+) = (1S,2R)-1-C-(indol-3-yl)glycerol 3-phosphate + CO2 + H2O. It participates in amino-acid biosynthesis; L-tryptophan biosynthesis; L-tryptophan from chorismate: step 4/5. In Neisseria meningitidis serogroup C / serotype 2a (strain ATCC 700532 / DSM 15464 / FAM18), this protein is Indole-3-glycerol phosphate synthase.